The primary structure comprises 677 residues: Glutamine--fructose-6-phosphate aminotransferase [isomerizing] 1 (677 aa).

The active-site Nucleophile is cysteine 2. Residues 2–269 enclose the Glutamine amidotransferase type-2 domain; sequence CGIFAYLNFH…DGEVVNLKDG (268 aa). SIS domains are found at residues 353-492 and 524-667; these read HLKT…DTIS and LAQL…VDQP. Residues 370 to 371, 415 to 417, threonine 420, and histidine 571 each bind substrate; these read TS and SQS.

Homotetramer, may also exist as homodimers. In terms of tissue distribution, highly expressed in flowers specifically in mature anthers, mature pollen grains and pollen tubes. Barely observed in roots, leaves and stems.

The catalysed reaction is D-fructose 6-phosphate + L-glutamine = D-glucosamine 6-phosphate + L-glutamate. Its pathway is nucleotide-sugar biosynthesis; UDP-N-acetyl-alpha-D-glucosamine biosynthesis; alpha-D-glucosamine 6-phosphate from D-fructose 6-phosphate: step 1/1. In terms of biological role, controls the flux of glucose into the hexosamine biosynthetic pathway (HBP) leading to glucosamine (GlcN) content homeostasis. Involved in regulating the availability of precursors for N- and O-linked glycosylation of proteins. Required during pollen maturation and pollen tube formation by triggering polar deposition of pectin and callose in the pollen cell wall. Promotes tolerance to tunicamycin (Tm), an inhibitor of proteins N-glycosylation in endoplasmic reticulum (ER). The chain is Glutamine--fructose-6-phosphate aminotransferase [isomerizing] 1 from Arabidopsis thaliana (Mouse-ear cress).